Reading from the N-terminus, the 311-residue chain is MSSLFSSFCLVIAIFESVVGLLGNGTIVAVSSTSCIRSKILSSYDVIVIFLSLSRFFLQLWMILDFLLIFFCQPSYYEENLFVTFKTVFIFLNSYSFWFAAWLSVFYCVKVASFTQSFLSWLKQRIASLIPWMLITSSLFSFATSLPFFWDSYNAHSNFTTPLTMTNSSKRITTRKTNLIFLILLCNVGIALPSIMLVFSSILLIRSLWRHTRQMQNNATGFRDPSLEALIGAIKTVFSFLLLYITNFIALILILSDTFVPLSTEEAICVVVVAACPAGQSMVLIWSNPRFRELLSSILHYVNSCVRARCS.

The Extracellular segment spans residues 1 to 9; the sequence is MSSLFSSFC. A helical transmembrane segment spans residues 10–30; sequence LVIAIFESVVGLLGNGTIVAV. At 31-55 the chain is on the cytoplasmic side; it reads SSTSCIRSKILSSYDVIVIFLSLSR. A helical transmembrane segment spans residues 56–76; sequence FFLQLWMILDFLLIFFCQPSY. The Extracellular segment spans residues 77 to 87; the sequence is YEENLFVTFKT. A helical transmembrane segment spans residues 88–108; that stretch reads VFIFLNSYSFWFAAWLSVFYC. Topologically, residues 109–128 are cytoplasmic; the sequence is VKVASFTQSFLSWLKQRIAS. The chain crosses the membrane as a helical span at residues 129–149; that stretch reads LIPWMLITSSLFSFATSLPFF. Topologically, residues 150–178 are extracellular; the sequence is WDSYNAHSNFTTPLTMTNSSKRITTRKTN. A helical transmembrane segment spans residues 179–199; that stretch reads LIFLILLCNVGIALPSIMLVF. The Cytoplasmic portion of the chain corresponds to 200–235; that stretch reads SSILLIRSLWRHTRQMQNNATGFRDPSLEALIGAIK. The helical transmembrane segment at 236 to 256 threads the bilayer; that stretch reads TVFSFLLLYITNFIALILILS. At 257-266 the chain is on the extracellular side; it reads DTFVPLSTEE. A helical membrane pass occupies residues 267-287; it reads AICVVVVAACPAGQSMVLIWS. The Cytoplasmic portion of the chain corresponds to 288-311; sequence NPRFRELLSSILHYVNSCVRARCS.

This sequence belongs to the G-protein coupled receptor T2R family. Expressed in the oral cavity, as well as in the gastrointestinal tract, including in the upper palate, tongue, proventriculus, ventriculus, duodenum, jejunum, ileum, cecum and colon.

The protein resides in the cell membrane. In terms of biological role, bitter taste receptor. Binds quinine, dextromethorphan, diphenhydramine, diphenidol, chlorpheniramine, diphenidol, chloramphenicol, chloroquine and coumarin, this latter being a weak agonist, as well as epiquinidine, ethylhydrocupreine and quinidine. The chain is Taste receptor type 2 member 40 (TAS2R40) from Gallus gallus (Chicken).